A 59-amino-acid polypeptide reads, in one-letter code: Large ribosomal subunit protein bL33 (59 aa).

It belongs to the bacterial ribosomal protein bL33 family.

The sequence is that of Large ribosomal subunit protein bL33 from Neorickettsia sennetsu (strain ATCC VR-367 / Miyayama) (Ehrlichia sennetsu).